Consider the following 50-residue polypeptide: Sproutin (50 aa).

Ser8 is subject to Phosphoserine; by PKC.

In terms of tissue distribution, brain.

Its function is as follows. Neurite outgrowth factor. This is Sproutin from Rattus norvegicus (Rat).